The sequence spans 69 residues: Large ribosomal subunit protein bL31 (69 aa).

It belongs to the bacterial ribosomal protein bL31 family. Type A subfamily. Part of the 50S ribosomal subunit.

Binds the 23S rRNA. The protein is Large ribosomal subunit protein bL31 of Mycoplasmopsis pulmonis (strain UAB CTIP) (Mycoplasma pulmonis).